A 72-amino-acid chain; its full sequence is Translation initiation factor IF-1 (72 aa).

An S1-like domain is found at 1-72; that stretch reads MSKEDHIEME…SKARITFRHR (72 aa).

Belongs to the IF-1 family. Component of the 30S ribosomal translation pre-initiation complex which assembles on the 30S ribosome in the order IF-2 and IF-3, IF-1 and N-formylmethionyl-tRNA(fMet); mRNA recruitment can occur at any time during PIC assembly.

It localises to the cytoplasm. Its function is as follows. One of the essential components for the initiation of protein synthesis. Stabilizes the binding of IF-2 and IF-3 on the 30S subunit to which N-formylmethionyl-tRNA(fMet) subsequently binds. Helps modulate mRNA selection, yielding the 30S pre-initiation complex (PIC). Upon addition of the 50S ribosomal subunit IF-1, IF-2 and IF-3 are released leaving the mature 70S translation initiation complex. The chain is Translation initiation factor IF-1 from Methylococcus capsulatus (strain ATCC 33009 / NCIMB 11132 / Bath).